The sequence spans 275 residues: Putative rhamnulose-1-phosphate aldolase (275 aa).

The active site involves Glu-117. Positions 141, 143, and 212 each coordinate Zn(2+).

The protein belongs to the aldolase class II family. RhaD subfamily. Homotetramer. Zn(2+) is required as a cofactor.

It localises to the cytoplasm. It catalyses the reaction L-rhamnulose 1-phosphate = (S)-lactaldehyde + dihydroxyacetone phosphate. It functions in the pathway carbohydrate degradation; L-rhamnose degradation; glycerone phosphate from L-rhamnose: step 3/3. In terms of biological role, catalyzes the reversible cleavage of L-rhamnulose-1-phosphate to dihydroxyacetone phosphate (DHAP) and L-lactaldehyde. The protein is Putative rhamnulose-1-phosphate aldolase of Salmonella typhi.